A 232-amino-acid polypeptide reads, in one-letter code: CMP-N,N'-diacetyllegionaminic acid synthase (232 aa).

It belongs to the CMP-NeuNAc synthase family.

It carries out the reaction N,N-diacetyllegionaminate + CTP = CMP-N,N-diacetyllegionaminate + diphosphate. Functionally, involved in biosynthesis of legionaminic acid (5,7-diamino-3,5,7,9-tetradeoxy-D-glycero-D-galacto-non-2-ulosonic acid)(Leg), a sialic acid-like derivative that is incorporated into virulence-associated cell surface glycoconjugates such as lipopolysaccharide (LPS) which could be a key determinant in the ability of L.pneumophila to inhibit the fusion of phagosomes with lysosomes. LPS contains a majority alpha2,4-linked homomer of legionaminic acid. Catalyzes the conversion of N,N'-diacetyllegionaminic acid (Leg5Ac7Ac) and CTP into CMP-N,N'-diacetyllegionaminic acid (CMP-Leg5Ac7Ac). This Legionella pneumophila subsp. pneumophila (strain Philadelphia 1 / ATCC 33152 / DSM 7513) protein is CMP-N,N'-diacetyllegionaminic acid synthase (neuA).